The chain runs to 166 residues: Crossover junction endodeoxyribonuclease RuvC (166 aa).

Catalysis depends on residues Asp-7, Glu-68, and Asp-141. Mg(2+) contacts are provided by Asp-7, Glu-68, and Asp-141.

It belongs to the RuvC family. Homodimer which binds Holliday junction (HJ) DNA. The HJ becomes 2-fold symmetrical on binding to RuvC with unstacked arms; it has a different conformation from HJ DNA in complex with RuvA. In the full resolvosome a probable DNA-RuvA(4)-RuvB(12)-RuvC(2) complex forms which resolves the HJ. Requires Mg(2+) as cofactor.

The protein localises to the cytoplasm. It carries out the reaction Endonucleolytic cleavage at a junction such as a reciprocal single-stranded crossover between two homologous DNA duplexes (Holliday junction).. The RuvA-RuvB-RuvC complex processes Holliday junction (HJ) DNA during genetic recombination and DNA repair. Endonuclease that resolves HJ intermediates. Cleaves cruciform DNA by making single-stranded nicks across the HJ at symmetrical positions within the homologous arms, yielding a 5'-phosphate and a 3'-hydroxyl group; requires a central core of homology in the junction. The consensus cleavage sequence is 5'-(A/T)TT(C/G)-3'. Cleavage occurs on the 3'-side of the TT dinucleotide at the point of strand exchange. HJ branch migration catalyzed by RuvA-RuvB allows RuvC to scan DNA until it finds its consensus sequence, where it cleaves and resolves the cruciform DNA. This is Crossover junction endodeoxyribonuclease RuvC from Koribacter versatilis (strain Ellin345).